The following is a 657-amino-acid chain: Glycogen debranching enzyme (657 aa).

Asp-336 functions as the Nucleophile in the catalytic mechanism. Catalysis depends on Glu-371, which acts as the Proton donor. Residues 458-467 (NEANGEENRD) are compositionally biased toward basic and acidic residues. Residues 458–479 (NEANGEENRDGTNNNYSNNHGK) are disordered.

Belongs to the glycosyl hydrolase 13 family.

The catalysed reaction is Hydrolysis of (1-&gt;6)-alpha-D-glucosidic linkages to branches with degrees of polymerization of three or four glucose residues in limit dextrin.. The protein operates within glycan degradation; glycogen degradation. In terms of biological role, removes maltotriose and maltotetraose chains that are attached by 1,6-alpha-linkage to the limit dextrin main chain, generating a debranched limit dextrin. This chain is Glycogen debranching enzyme, found in Escherichia coli (strain K12 / DH10B).